Here is a 473-residue protein sequence, read N- to C-terminus: Glutamate--tRNA ligase (473 aa).

The short motif at Pro-9–Ser-19 is the 'HIGH' region element. Positions Lys-237–Lys-241 match the 'KMSKS' region motif. Lys-240 lines the ATP pocket.

The protein belongs to the class-I aminoacyl-tRNA synthetase family. Glutamate--tRNA ligase type 1 subfamily. In terms of assembly, monomer.

The protein localises to the cytoplasm. The catalysed reaction is tRNA(Glu) + L-glutamate + ATP = L-glutamyl-tRNA(Glu) + AMP + diphosphate. Catalyzes the attachment of glutamate to tRNA(Glu) in a two-step reaction: glutamate is first activated by ATP to form Glu-AMP and then transferred to the acceptor end of tRNA(Glu). The protein is Glutamate--tRNA ligase of Wigglesworthia glossinidia brevipalpis.